Reading from the N-terminus, the 204-residue chain is Small ribosomal subunit protein uS4 (204 aa).

The tract at residues A25–S45 is disordered. Residues M92–E152 form the S4 RNA-binding domain.

It belongs to the universal ribosomal protein uS4 family. Part of the 30S ribosomal subunit. Contacts protein S5. The interaction surface between S4 and S5 is involved in control of translational fidelity.

Functionally, one of the primary rRNA binding proteins, it binds directly to 16S rRNA where it nucleates assembly of the body of the 30S subunit. Its function is as follows. With S5 and S12 plays an important role in translational accuracy. The chain is Small ribosomal subunit protein uS4 from Cyanothece sp. (strain PCC 7425 / ATCC 29141).